Consider the following 355-residue polypeptide: MDTAEERLKGQAEIWEHMFAFVDSMALKCAVELGIPDIINSHGRPVTISEIVDSLKTNTPSSSPNIDYLTRIMRLLVHKRLFTSELHQESNQLLYNLTRSSKWLLKDSKFNLSPLVLWETNPILLKPWQYLGKCAQEKSSPFERAHGCEIWDLALADPKFNNFLNGAMQCSTTTIINEMLLEYKDGFSGIAGSLVDVGGGTGSIIAEIVKAHPHIQGINFDLPHVVATAAEFPGVKHVGGDMFVDIPEADAVIMKWILHDWSDEDCTIILKNCYRAIRKKKNGKVIIVDCVLRPDGNDLFDKMGLIFDVLMMAHTTAGKERTEAEWKILLNNAGFPRYNVIRTPAFPCIIEAFPE.

S-adenosyl-L-methionine-binding positions include 197–200 (VGGG), Asp221, 221–222 (DL), 241–242 (DM), and Lys255. The active-site Proton acceptor is His259.

Belongs to the class I-like SAM-binding methyltransferase superfamily. Cation-independent O-methyltransferase family. In terms of assembly, homodimer. In terms of tissue distribution, expressed in capsules, buds and stems, and at lower levels in leaves. Localized to parenchyma cells within the vascular bundle, but only to those cells distal to laticifers. In roots, found in the pericycle within the stele.

It catalyses the reaction (S)-reticuline + S-adenosyl-L-methionine = (S)-laudanine + S-adenosyl-L-homocysteine + H(+). The enzyme catalyses (R)-reticuline + S-adenosyl-L-methionine = (R)-laudanine + S-adenosyl-L-homocysteine + H(+). Its function is as follows. Catalyzes the transfer of a methyl group to reticuline to form laudanine. Methylates the simple catechols guaiacol and isovanillic acid as well as the tetrahydrobenzylisoquinolines (R)-reticuline, (S)-reticuline, (R,S)-orientaline, (R)-protosinomenine and (R,S)-isoorientaline. Involved in the production of laudanine. This is (R,S)-reticuline 7-O-methyltransferase from Papaver somniferum (Opium poppy).